We begin with the raw amino-acid sequence, 496 residues long: Glycerol kinase (496 aa).

Thr-12 provides a ligand contact to ADP. Thr-12, Thr-13, and Ser-14 together coordinate ATP. Residue Thr-12 participates in sn-glycerol 3-phosphate binding. Arg-16 provides a ligand contact to ADP. 3 residues coordinate sn-glycerol 3-phosphate: Arg-82, Glu-83, and Tyr-134. Arg-82, Glu-83, and Tyr-134 together coordinate glycerol. At His-230 the chain carries Phosphohistidine; by HPr. Asp-244 provides a ligand contact to sn-glycerol 3-phosphate. Positions 244 and 245 each coordinate glycerol. Residues Thr-266 and Gly-309 each coordinate ADP. Thr-266, Gly-309, Gln-313, and Gly-410 together coordinate ATP. Positions 410 and 414 each coordinate ADP.

It belongs to the FGGY kinase family. Homotetramer and homodimer (in equilibrium). The phosphoenolpyruvate-dependent sugar phosphotransferase system (PTS), including enzyme I, and histidine-containing protein (HPr) are required for the phosphorylation, which leads to the activation of the enzyme.

It catalyses the reaction glycerol + ATP = sn-glycerol 3-phosphate + ADP + H(+). It participates in polyol metabolism; glycerol degradation via glycerol kinase pathway; sn-glycerol 3-phosphate from glycerol: step 1/1. Activated by phosphorylation and inhibited by fructose 1,6-bisphosphate (FBP). Functionally, key enzyme in the regulation of glycerol uptake and metabolism. Catalyzes the phosphorylation of glycerol to yield sn-glycerol 3-phosphate. This is Glycerol kinase from Bacillus cereus (strain G9842).